Reading from the N-terminus, the 595-residue chain is DNA ligase (595 aa).

Residues 32-36, 81-82, and E113 each bind NAD(+); these read DEKYD and SL. The active-site N6-AMP-lysine intermediate is K115. NAD(+) contacts are provided by R136, E178, K296, and K320. Zn(2+) is bound by residues C414, C417, C432, and C438.

Belongs to the NAD-dependent DNA ligase family. LigA subfamily. It depends on Mg(2+) as a cofactor. Mn(2+) is required as a cofactor.

It catalyses the reaction NAD(+) + (deoxyribonucleotide)n-3'-hydroxyl + 5'-phospho-(deoxyribonucleotide)m = (deoxyribonucleotide)n+m + AMP + beta-nicotinamide D-nucleotide.. In terms of biological role, DNA ligase that catalyzes the formation of phosphodiester linkages between 5'-phosphoryl and 3'-hydroxyl groups in double-stranded DNA using NAD as a coenzyme and as the energy source for the reaction. It is essential for DNA replication and repair of damaged DNA. The chain is DNA ligase from Blochmanniella pennsylvanica (strain BPEN).